The chain runs to 729 residues: Alpha-galactosidase AgaA (729 aa).

Substrate is bound by residues aspartate 53, tryptophan 199, 366–367 (DD), arginine 443, 476–480 (KWDMN), cysteine 526, and aspartate 548. Catalysis depends on aspartate 478, which acts as the Nucleophile. Aspartate 548 acts as the Proton donor in catalysis.

It belongs to the glycosyl hydrolase 36 family. In terms of assembly, homotetramer.

The catalysed reaction is Hydrolysis of terminal, non-reducing alpha-D-galactose residues in alpha-D-galactosides, including galactose oligosaccharides, galactomannans and galactolipids.. With respect to regulation, not inhibited by D-galactose or sucrose. Inhibited by pharmaceutical drug 1-deoxygalactonojirimycin. Functionally, hydrolyzes the short-chain alpha-galactosaccharides raffinose and stachyose. This chain is Alpha-galactosidase AgaA, found in Geobacillus stearothermophilus (Bacillus stearothermophilus).